Consider the following 256-residue polypeptide: Triosephosphate isomerase (256 aa).

9 to 11 (NWK) is a binding site for substrate. The Electrophile role is filled by His-97. Glu-169 (proton acceptor) is an active-site residue. Substrate contacts are provided by residues Gly-175, Ser-214, and 235-236 (GG).

This sequence belongs to the triosephosphate isomerase family. Homodimer.

The protein resides in the cytoplasm. It carries out the reaction D-glyceraldehyde 3-phosphate = dihydroxyacetone phosphate. The protein operates within carbohydrate biosynthesis; gluconeogenesis. It functions in the pathway carbohydrate degradation; glycolysis; D-glyceraldehyde 3-phosphate from glycerone phosphate: step 1/1. Involved in the gluconeogenesis. Catalyzes stereospecifically the conversion of dihydroxyacetone phosphate (DHAP) to D-glyceraldehyde-3-phosphate (G3P). This chain is Triosephosphate isomerase, found in Vibrio parahaemolyticus serotype O3:K6 (strain RIMD 2210633).